We begin with the raw amino-acid sequence, 429 residues long: Probable E3 ubiquitin-protein ligase makorin-1 (429 aa).

3 C3H1-type zinc fingers span residues 18 to 45 (WTKH…HDLT), 48 to 75 (KPAA…HCKP), and 153 to 180 (ELRK…HGDV). The makorin-type Cys-His stretch occupies residues 181–208 (CDMCGLQVLHPTDSSQRSEHTKACIEAH). The RING-type zinc finger occupies 226–280 (CGVCMEVVFEKANPSERRFGILSNCSHCYCLKCIRKWRSAKQFESKIIKSCPECR). The segment at 309–338 (GMGRKPCRYFDEGRGICPFGANCFYKHAFP) adopts a C3H1-type 4 zinc-finger fold. A disordered region spans residues 343-362 (EEAQPQRRQTGSSSRNRNSR). Over residues 348-358 (QRRQTGSSSRN) the composition is skewed to low complexity.

It catalyses the reaction S-ubiquitinyl-[E2 ubiquitin-conjugating enzyme]-L-cysteine + [acceptor protein]-L-lysine = [E2 ubiquitin-conjugating enzyme]-L-cysteine + N(6)-ubiquitinyl-[acceptor protein]-L-lysine.. It functions in the pathway protein modification; protein ubiquitination. Its function is as follows. E3 ubiquitin ligase catalyzing the covalent attachment of ubiquitin moieties onto substrate proteins. The polypeptide is Probable E3 ubiquitin-protein ligase makorin-1 (Takifugu rubripes (Japanese pufferfish)).